We begin with the raw amino-acid sequence, 321 residues long: MSLQKLMEPEAGTNRTAVAEFILLGLVQTEEMQPVVFVLLLFAYLVTTGGNLSILAAVLVEPKLHAPMYFFLGNLSVLDVGCITVTVPAMLGRLLSHKSTISYDACLSQLFFFHLLAGMDCFLLTAMAYDRLLAICQPLTYSTRMSQTVQRMLVAASLACAFTNALTHTVAMSTLNFCGPNEVNHFYCDLPQLFQLSCSSTQLNELLLFAVGFIMAGTPLVLIITAYSHVAAAVLRIRSVEGRKKAFSTCGSHLTVVCLFFGRGIFNYMRLGSEEASDKDKGVGVFNTVINPMLNPLIYSLRNPDVQGALWQIFLGRRSLT.

Residues 1 to 35 (MSLQKLMEPEAGTNRTAVAEFILLGLVQTEEMQPV) lie on the Extracellular side of the membrane. Asn14 is a glycosylation site (N-linked (GlcNAc...) asparagine). The chain crosses the membrane as a helical span at residues 36 to 58 (VFVLLLFAYLVTTGGNLSILAAV). At 59-66 (LVEPKLHA) the chain is on the cytoplasmic side. The helical transmembrane segment at 67 to 88 (PMYFFLGNLSVLDVGCITVTVP) threads the bilayer. At 89–109 (AMLGRLLSHKSTISYDACLSQ) the chain is on the extracellular side. Residues Cys106 and Cys198 are joined by a disulfide bond. Residues 110-129 (LFFFHLLAGMDCFLLTAMAY) traverse the membrane as a helical segment. Topologically, residues 130-149 (DRLLAICQPLTYSTRMSQTV) are cytoplasmic. A helical transmembrane segment spans residues 150-167 (QRMLVAASLACAFTNALT). Topologically, residues 168–205 (HTVAMSTLNFCGPNEVNHFYCDLPQLFQLSCSSTQLNE) are extracellular. The chain crosses the membrane as a helical span at residues 206 to 229 (LLLFAVGFIMAGTPLVLIITAYSH). At 230 to 246 (VAAAVLRIRSVEGRKKA) the chain is on the cytoplasmic side. A helical transmembrane segment spans residues 247 to 270 (FSTCGSHLTVVCLFFGRGIFNYMR). The Extracellular portion of the chain corresponds to 271–281 (LGSEEASDKDK). Residues 282–301 (GVGVFNTVINPMLNPLIYSL) traverse the membrane as a helical segment. At 302–321 (RNPDVQGALWQIFLGRRSLT) the chain is on the cytoplasmic side.

It belongs to the G-protein coupled receptor 1 family.

The protein localises to the cell membrane. In terms of biological role, odorant receptor. This is Olfactory receptor 3A2 (OR3A2) from Homo sapiens (Human).